We begin with the raw amino-acid sequence, 167 residues long: Large ribosomal subunit protein uL23 (167 aa).

The segment at 1–118 (MNVNEIIKGP…TEEKAKIAKK (118 aa)) is large ribosomal subunit protein uL23. Disordered regions lie at residues 91–112 (FEDESPQDQKDSETVSENTEEK) and 136–167 (KQAELAKKDSETNENQEKRIENQTENQENSAN). Composition is skewed to basic and acidic residues over residues 97 to 112 (QDQKDSETVSENTEEK) and 136 to 157 (KQAELAKKDSETNENQEKRIEN). The tract at residues 119–167 (KAELEAKNKEIAEKLAKKQAELAKKDSETNENQEKRIENQTENQENSAN) is unknown. Residues 158–167 (QTENQENSAN) show a composition bias toward polar residues.

The protein belongs to the universal ribosomal protein uL23 family. In terms of assembly, part of the 50S ribosomal subunit. Contacts protein L29, and trigger factor when it is bound to the ribosome.

Functionally, one of the early assembly proteins it binds 23S rRNA. One of the proteins that surrounds the polypeptide exit tunnel on the outside of the ribosome. Forms the main docking site for trigger factor binding to the ribosome. The polypeptide is Large ribosomal subunit protein uL23 (Mesomycoplasma hyopneumoniae (strain J / ATCC 25934 / NCTC 10110) (Mycoplasma hyopneumoniae)).